Reading from the N-terminus, the 819-residue chain is Ribosome-releasing factor 2, mitochondrial (819 aa).

The N-terminal 30 residues, Met-1–Tyr-30, are a transit peptide targeting the mitochondrion. The 289-residue stretch at Ser-39–Ile-327 folds into the tr-type G domain. Residues Ala-48 to Thr-55, Asp-113 to His-117, and Asn-165 to Asp-168 contribute to the GTP site.

This sequence belongs to the TRAFAC class translation factor GTPase superfamily. Classic translation factor GTPase family. EF-G/EF-2 subfamily.

Its subcellular location is the mitochondrion. In terms of biological role, mitochondrial GTPase that mediates the disassembly of ribosomes from messenger RNA at the termination of mitochondrial protein biosynthesis. Not involved in the GTP-dependent ribosomal translocation step during translation elongation. This chain is Ribosome-releasing factor 2, mitochondrial, found in Saccharomyces cerevisiae (strain RM11-1a) (Baker's yeast).